Consider the following 647-residue polypeptide: Threonine--tRNA ligase (647 aa).

In terms of domain architecture, TGS spans 1–63 (MEVRVEGQMV…PAGCTGIEPV (63 aa)). The tract at residues 244 to 535 (DHRKLGRELS…LVENFAGALP (292 aa)) is catalytic. Cys336, His387, and His512 together coordinate Zn(2+).

The protein belongs to the class-II aminoacyl-tRNA synthetase family. Homodimer. Zn(2+) serves as cofactor.

It is found in the cytoplasm. It catalyses the reaction tRNA(Thr) + L-threonine + ATP = L-threonyl-tRNA(Thr) + AMP + diphosphate + H(+). Catalyzes the attachment of threonine to tRNA(Thr) in a two-step reaction: L-threonine is first activated by ATP to form Thr-AMP and then transferred to the acceptor end of tRNA(Thr). Also edits incorrectly charged L-seryl-tRNA(Thr). The polypeptide is Threonine--tRNA ligase (Desulfovibrio desulfuricans (strain ATCC 27774 / DSM 6949 / MB)).